Reading from the N-terminus, the 89-residue chain is Small ribosomal subunit protein uS15 (89 aa).

Belongs to the universal ribosomal protein uS15 family. As to quaternary structure, part of the 30S ribosomal subunit. Forms a bridge to the 50S subunit in the 70S ribosome, contacting the 23S rRNA.

One of the primary rRNA binding proteins, it binds directly to 16S rRNA where it helps nucleate assembly of the platform of the 30S subunit by binding and bridging several RNA helices of the 16S rRNA. Its function is as follows. Forms an intersubunit bridge (bridge B4) with the 23S rRNA of the 50S subunit in the ribosome. The chain is Small ribosomal subunit protein uS15 from Ureaplasma parvum serovar 3 (strain ATCC 27815 / 27 / NCTC 11736).